The following is a 503-amino-acid chain: Probable cytosol aminopeptidase (503 aa).

Mn(2+) is bound by residues Lys274 and Asp279. The active site involves Lys286. Positions 297, 356, and 358 each coordinate Mn(2+). Arg360 is an active-site residue.

Belongs to the peptidase M17 family. Mn(2+) is required as a cofactor.

It localises to the cytoplasm. The enzyme catalyses Release of an N-terminal amino acid, Xaa-|-Yaa-, in which Xaa is preferably Leu, but may be other amino acids including Pro although not Arg or Lys, and Yaa may be Pro. Amino acid amides and methyl esters are also readily hydrolyzed, but rates on arylamides are exceedingly low.. The catalysed reaction is Release of an N-terminal amino acid, preferentially leucine, but not glutamic or aspartic acids.. In terms of biological role, presumably involved in the processing and regular turnover of intracellular proteins. Catalyzes the removal of unsubstituted N-terminal amino acids from various peptides. The chain is Probable cytosol aminopeptidase from Burkholderia mallei (strain SAVP1).